The sequence spans 529 residues: NADPH-dependent thioredoxin reductase 3 (529 aa).

The N-terminal 67 residues, 1 to 67 (MAASPKIGIG…SSDSLRLRVS (67 aa)), are a transit peptide targeting the chloroplast. A disordered region spans residues 54–78 (TRTRSSDSLRLRVSATANSPSSSSS). Over residues 64-78 (LRVSATANSPSSSSS) the composition is skewed to low complexity. Residues 91–94 (SGPA), 113–120 (EGYQMGGV), N133, V166, and C220 each bind FAD. C217 and C220 are oxidised to a cystine. 4 residues coordinate NADP(+): T240, R265, I324, and Y344. FAD contacts are provided by residues D364 and 371–374 (RQAV). R371 provides a ligand contact to NADP(+). The region spanning 403–529 (PQTEEAKKEF…EYREFIEANK (127 aa)) is the Thioredoxin domain. Catalysis depends on nucleophile residues C454 and C457. C454 and C457 form a disulfide bridge.

It belongs to the class-II pyridine nucleotide-disulfide oxidoreductase family. As to quaternary structure, may homodimerize. Interacts with the 2-Cys peroxiredoxin BAS1. Requires FAD as cofactor.

It localises to the plastid. The protein localises to the chloroplast. The catalysed reaction is [thioredoxin]-dithiol + NADP(+) = [thioredoxin]-disulfide + NADPH + H(+). Thioredoxin reductase (TR) that exhibits both TR and thioredoxin (Trx) activities. Contains a C-terminal functional Trx domain. Functions as an electron donor for plastidial 2-Cys peroxiredoxins and participates in a NADPH-dependent hydrogen peroxide scavenging system in chloroplasts in the dark. Required for chlorophyll biosynthesis and biogenesis of the photosynthetic apparatus. Activates aerobic cyclase which converts Mg-protoporhyrin monomethyl ester into protochlorophyllide. Involved in a light-dependent regulation of starch biosynthesis by redox activation of the ADP-glucose pyrophosphorylase (AGPase), a central enzyme of starch synthesis. The chain is NADPH-dependent thioredoxin reductase 3 from Arabidopsis thaliana (Mouse-ear cress).